The chain runs to 399 residues: UDP-galactopyranose mutase (399 aa).

FAD contacts are provided by residues Ser-25, 44-45, Asn-52, and 71-72; these read EK and HI. Ser-171, Trp-175, Tyr-200, Asn-297, Arg-306, and Tyr-345 together coordinate UDP-alpha-D-galactose. Arg-374 lines the FAD pocket. Tyr-380 serves as a coordination point for UDP-alpha-D-galactose. Position 381 to 386 (381 to 386) interacts with FAD; that stretch reads IDMDRA.

The protein belongs to the UDP-galactopyranose/dTDP-fucopyranose mutase family. It depends on FAD as a cofactor.

It catalyses the reaction UDP-alpha-D-galactose = UDP-alpha-D-galactofuranose. Functionally, involved in the conversion of UDP-GalP into UDP-GalF through a 2-keto intermediate. The protein is UDP-galactopyranose mutase (glf) of Mycoplasma pneumoniae (strain ATCC 29342 / M129 / Subtype 1) (Mycoplasmoides pneumoniae).